Consider the following 478-residue polypeptide: Lipoprotein lipase (478 aa).

Residues 1-28 form the signal peptide; sequence MESKALLLLALSVCLQSLTVSRGGLVAA. Residues 35-56 are interaction with GPIHBP1; it reads KDFRDIESKFALRTPEDTAEDT. Cysteines 57 and 70 form a disulfide. The N-linked (GlcNAc...) asparagine glycan is linked to N73. Residue Y124 is modified to 3'-nitrotyrosine. S162 acts as the Nucleophile in catalysis. The Charge relay system role is filled by D186. Y194 is modified (3'-nitrotyrosine). Residues A197, R200, S202, and D205 each contribute to the Ca(2+) site. C246 and C269 are disulfide-bonded. Residues 246 to 269 form an essential for determining substrate specificity region; it reads CNIGEALRVIAERGLGDVDQLVKC. The active-site Charge relay system is the H271. N287 carries an N-linked (GlcNAc...) asparagine glycan. Cystine bridges form between C294/C313 and C305/C308. The region spanning 344-467 is the PLAT domain; that stretch reads FHYQVKIHFS…KGKSPVIFVK (124 aa). Y346 carries the post-translational modification 3'-nitrotyrosine. Residue N389 is glycosylated (N-linked (GlcNAc...) asparagine). The interval 420-424 is important for interaction with lipoprotein particles; it reads WSNWW. The segment at 433 to 437 is important for heparin binding; that stretch reads KIRVK. The interval 446 to 470 is interaction with GPIHBP1; it reads IFCSREKMSYLQKGKSPVIFVKCHD. C448 and C468 form a disulfide bridge.

Belongs to the AB hydrolase superfamily. Lipase family. In terms of assembly, homodimer. Interacts with GPIHBP1 with 1:1 stoichiometry. Interacts with APOC2; the interaction activates LPL activity in the presence of lipids. Interaction with heparan sulfate proteoglycans is required to protect LPL against loss of activity. Associates with lipoprotein particles in blood plasma. Interacts with LMF1 and SEL1L; interaction with SEL1L is required to prevent aggregation of newly synthesized LPL in the endoplasmic reticulum (ER), and for normal export of LPL from the ER to the extracellular space. Interacts with SORL1; SORL1 acts as a sorting receptor, promoting LPL localization to endosomes and later to lysosomes, leading to degradation of newly synthesized LPL. Post-translationally, tyrosine nitration after lipopolysaccharide (LPS) challenge down-regulates the lipase activity. As to expression, detected in milk (at protein level).

The protein localises to the cell membrane. It localises to the secreted. It is found in the extracellular space. The protein resides in the extracellular matrix. The enzyme catalyses a triacylglycerol + H2O = a diacylglycerol + a fatty acid + H(+). The catalysed reaction is a 1,2-diacyl-sn-glycero-3-phosphocholine + H2O = a 2-acyl-sn-glycero-3-phosphocholine + a fatty acid + H(+). It catalyses the reaction 1,2,3-tri-(9Z-octadecenoyl)-glycerol + H2O = di-(9Z)-octadecenoylglycerol + (9Z)-octadecenoate + H(+). It carries out the reaction 1,2-di-(9Z-octadecenoyl)-sn-glycero-3-phosphocholine + H2O = (9Z-octadecenoyl)-sn-glycero-3-phosphocholine + (9Z)-octadecenoate + H(+). The enzyme catalyses 1,2,3-tributanoylglycerol + H2O = dibutanoylglycerol + butanoate + H(+). The catalysed reaction is 1,2-dihexadecanoyl-sn-glycero-3-phosphocholine + H2O = hexadecanoyl-sn-glycero-3-phosphocholine + hexadecanoate + H(+). With respect to regulation, the apolipoprotein APOC2 acts as a coactivator of LPL activity. Ca(2+) binding promotes protein stability and formation of the active homodimer. Interaction with GPIHBP1 protects LPL against inactivation by ANGPTL4. Functionally, key enzyme in triglyceride metabolism. Catalyzes the hydrolysis of triglycerides from circulating chylomicrons and very low density lipoproteins (VLDL), and thereby plays an important role in lipid clearance from the blood stream, lipid utilization and storage. Although it has both phospholipase and triglyceride lipase activities it is primarily a triglyceride lipase with low but detectable phospholipase activity. Mediates margination of triglyceride-rich lipoprotein particles in capillaries. Recruited to its site of action on the luminal surface of vascular endothelium by binding to GPIHBP1 and cell surface heparan sulfate proteoglycans. The protein is Lipoprotein lipase (LPL) of Bos taurus (Bovine).